Consider the following 714-residue polypeptide: Polyribonucleotide nucleotidyltransferase (714 aa).

2 residues coordinate Mg(2+): Asp489 and Asp495. The KH domain maps to 556–615 (PKIDTIKIDVDKIKVVIGKGGETIDKIIAETGVKIDIDEEGNVSIYSSDQDAINRAKEII). An S1 motif domain is found at 625 to 693 (GEVYHAKVVR…DKGRIDASMK (69 aa)). A disordered region spans residues 691-714 (SMKALVPRPPKPEKSEAKKEGKHD). Positions 700 to 714 (PKPEKSEAKKEGKHD) are enriched in basic and acidic residues.

This sequence belongs to the polyribonucleotide nucleotidyltransferase family. It depends on Mg(2+) as a cofactor.

It localises to the cytoplasm. It carries out the reaction RNA(n+1) + phosphate = RNA(n) + a ribonucleoside 5'-diphosphate. Its function is as follows. Involved in mRNA degradation. Catalyzes the phosphorolysis of single-stranded polyribonucleotides processively in the 3'- to 5'-direction. This Streptococcus equi subsp. zooepidemicus (strain H70) protein is Polyribonucleotide nucleotidyltransferase.